A 629-amino-acid chain; its full sequence is Probable alpha-L-arabinofuranosidase A (629 aa).

The N-terminal stretch at 1–25 (MVALSTLSGLSALPFLFSLVQNVYG) is a signal peptide. 9 N-linked (GlcNAc...) asparagine glycosylation sites follow: Asn-36, Asn-51, Asn-140, Asn-152, Asn-168, Asn-171, Asn-260, Asn-494, and Asn-534.

The protein belongs to the glycosyl hydrolase 51 family.

The protein localises to the secreted. It carries out the reaction Hydrolysis of terminal non-reducing alpha-L-arabinofuranoside residues in alpha-L-arabinosides.. Its pathway is glycan metabolism; L-arabinan degradation. Its function is as follows. Alpha-L-arabinofuranosidase involved in the degradation of arabinoxylan, a major component of plant hemicellulose. Acts only on small linear 1,5-alpha-linked L-arabinofuranosyl oligosaccharides. This is Probable alpha-L-arabinofuranosidase A (abfA) from Aspergillus oryzae (strain ATCC 42149 / RIB 40) (Yellow koji mold).